Reading from the N-terminus, the 1617-residue chain is ATP-binding cassette sub-family A member 6 (1617 aa).

The helical transmembrane segment at 31–51 (LLEWGLSILLGLCIALFSSSM) threads the bilayer. N-linked (GlcNAc...) asparagine glycosylation is found at N84 and N109. 6 helical membrane passes run 222–242 (MFIL…SLNV), 268–288 (GLIY…IITF), 297–317 (FMVI…LVFL), 327–347 (LTNL…FTVF), 355–375 (LEWI…IQII), and 397–417 (IATF…ALYF). Positions 478-713 (IRIRNVKKEY…WGLGYHLSLH (236 aa)) constitute an ABC transporter 1 domain. 514 to 521 (GHSGAGKS) provides a ligand contact to ATP. The chain crosses the membrane as a helical span at residues 854 to 874 (VLLTLLLVFGIAIFPLIVENI). N940 carries an N-linked (GlcNAc...) asparagine glycan. 6 helical membrane-spanning segments follow: residues 1007-1027 (IGLW…LCSI), 1062-1082 (ALVD…IFYI), 1094-1114 (IVFA…FFIY), 1127-1147 (SGLW…ITLI), 1150-1170 (FDLS…LLGF), and 1194-1214 (ATDF…VFVL). The ABC transporter 2 domain occupies 1288–1513 (GQKKSCFSKR…LGKDYILELK (226 aa)). An ATP-binding site is contributed by 1320–1327 (GPNGAGKS).

The protein belongs to the ABC transporter superfamily. ABCA family. Widely expressed with higher expression in liver.

Its subcellular location is the golgi apparatus membrane. Its function is as follows. Probable transporter which may play a role in macrophage lipid transport and homeostasis. The protein is ATP-binding cassette sub-family A member 6 (ABCA6) of Homo sapiens (Human).